A 247-amino-acid chain; its full sequence is 3-deoxy-manno-octulosonate cytidylyltransferase (247 aa).

Belongs to the KdsB family.

Its subcellular location is the cytoplasm. It carries out the reaction 3-deoxy-alpha-D-manno-oct-2-ulosonate + CTP = CMP-3-deoxy-beta-D-manno-octulosonate + diphosphate. The protein operates within nucleotide-sugar biosynthesis; CMP-3-deoxy-D-manno-octulosonate biosynthesis; CMP-3-deoxy-D-manno-octulosonate from 3-deoxy-D-manno-octulosonate and CTP: step 1/1. It participates in bacterial outer membrane biogenesis; lipopolysaccharide biosynthesis. Functionally, activates KDO (a required 8-carbon sugar) for incorporation into bacterial lipopolysaccharide in Gram-negative bacteria. In Chlorobium phaeovibrioides (strain DSM 265 / 1930) (Prosthecochloris vibrioformis (strain DSM 265)), this protein is 3-deoxy-manno-octulosonate cytidylyltransferase.